Reading from the N-terminus, the 133-residue chain is Cell division protein FtsL (133 aa).

Topologically, residues 1-45 (MAVEKVYQPYDEQVYNSIPKQQPQTKPEKKTVSRKVVVQLTKFEK) are cytoplasmic. A helical transmembrane segment spans residues 46–65 (VLYITLITVIAMLSIYMLSL). The Extracellular segment spans residues 66–133 (KMDAYDTRGK…VVRSNGEAKN (68 aa)).

It belongs to the FtsL family.

The protein localises to the cell membrane. Essential cell division protein. This chain is Cell division protein FtsL, found in Staphylococcus aureus (strain NCTC 8325 / PS 47).